The following is a 143-amino-acid chain: Large ribosomal subunit protein uL11 (143 aa).

Belongs to the universal ribosomal protein uL11 family. In terms of assembly, part of the ribosomal stalk of the 50S ribosomal subunit. Interacts with L10 and the large rRNA to form the base of the stalk. L10 forms an elongated spine to which L12 dimers bind in a sequential fashion forming a multimeric L10(L12)X complex. Post-translationally, one or more lysine residues are methylated.

Functionally, forms part of the ribosomal stalk which helps the ribosome interact with GTP-bound translation factors. This Teredinibacter turnerae (strain ATCC 39867 / T7901) protein is Large ribosomal subunit protein uL11.